The sequence spans 417 residues: Probable secreted aspartic protease ARB_07536 (417 aa).

A signal peptide spans 1–20; that stretch reads MRGILILVALGAATIPQASA. The Peptidase A1 domain maps to 42 to 413; the sequence is NTDLVTIGTP…DFEKNRVGLA (372 aa). 6 N-linked (GlcNAc...) asparagine glycosylation sites follow: asparagine 74, asparagine 91, asparagine 100, asparagine 170, asparagine 276, and asparagine 314. Cysteine 333 and cysteine 373 are joined by a disulfide.

It belongs to the peptidase A1 family.

The protein resides in the secreted. Functionally, probable secreted aspartic protease that supplies the fungus with nutrient amino acids. May be able to degrade the selected host's proteins involved in the immune defense. The protein is Probable secreted aspartic protease ARB_07536 of Arthroderma benhamiae (strain ATCC MYA-4681 / CBS 112371) (Trichophyton mentagrophytes).